The primary structure comprises 226 residues: Probable N-acetyl-alpha-D-glucosaminyl L-malate deacetylase 2 (226 aa).

Zn(2+) contacts are provided by histidine 13, aspartate 16, and histidine 127.

Belongs to the PIGL family. It depends on Zn(2+) as a cofactor.

It catalyses the reaction (S)-malyl N-acetyl-alpha-D-glucosaminide + H2O = (S)-malyl alpha-D-glucosaminide + acetate. Involved in bacillithiol (BSH) biosynthesis. Catalyzes the second step of the pathway, the deacetylation of N-acetylglucosaminylmalate (GlcNAc-Mal) to glucosamine malate (GlcN-Mal). Could also be involved in bacillithiol-detoxifying pathways through formation of S-mercapturic adducts. This is Probable N-acetyl-alpha-D-glucosaminyl L-malate deacetylase 2 from Bacillus anthracis.